The following is a 251-amino-acid chain: uncharacterized protein (251 aa).

The 116-residue stretch at 3-118 (KVIICDDERI…QLEHILDILV (116 aa)) folds into the Response regulatory domain. Asp-55 bears the 4-aspartylphosphate mark. Residues 152–249 (NQILSQIKQH…HMSPSDYNKQ (98 aa)) enclose the HTH araC/xylS-type domain. 2 DNA-binding regions (H-T-H motif) span residues 169–190 (LDLINPIDVSESYAMRTFKEHV) and 216–239 (HYEIAEKVGFSEYKMFCYHFKKYL).

Phosphorylated by SERP2405.

Its subcellular location is the cytoplasm. Probable member of the two-component regulatory system SERP2405/SERP2406. This is an uncharacterized protein from Staphylococcus epidermidis (strain ATCC 35984 / DSM 28319 / BCRC 17069 / CCUG 31568 / BM 3577 / RP62A).